Consider the following 351-residue polypeptide: Biotin synthase (351 aa).

One can recognise a Radical SAM core domain in the interval 42-269 (NEVQVSTLLS…KSHVRLSAGR (228 aa)). Residues C57, C61, and C64 each contribute to the [4Fe-4S] cluster site. The [2Fe-2S] cluster site is built by C101, C132, C192, and R264.

It belongs to the radical SAM superfamily. Biotin synthase family. Homodimer. The cofactor is [4Fe-4S] cluster. Requires [2Fe-2S] cluster as cofactor.

It carries out the reaction (4R,5S)-dethiobiotin + (sulfur carrier)-SH + 2 reduced [2Fe-2S]-[ferredoxin] + 2 S-adenosyl-L-methionine = (sulfur carrier)-H + biotin + 2 5'-deoxyadenosine + 2 L-methionine + 2 oxidized [2Fe-2S]-[ferredoxin]. It functions in the pathway cofactor biosynthesis; biotin biosynthesis; biotin from 7,8-diaminononanoate: step 2/2. Functionally, catalyzes the conversion of dethiobiotin (DTB) to biotin by the insertion of a sulfur atom into dethiobiotin via a radical-based mechanism. This is Biotin synthase from Psychromonas ingrahamii (strain DSM 17664 / CCUG 51855 / 37).